The sequence spans 194 residues: 2,4-dinitrotoluene dioxygenase system, small oxygenase component (194 aa).

It belongs to the bacterial ring-hydroxylating dioxygenase beta subunit family. The 2,4-dinitrotoluene dioxygenase (DNTDO) multicomponent enzyme system is composed of an electron transfer component and a dioxygenase component (iron sulfur protein (ISP)). The electron transfer component is composed of a ferredoxin reductase (DntAa) and a ferredoxin (DntAb), and the dioxygenase component is formed of a large alpha subunit (DntAc) and a small beta subunit (DntAd).

In terms of biological role, component of the 2,4-dinitrotoluene dioxygenase (DNTDO) multicomponent enzyme system which catalyzes the incorporation of both atoms of molecular oxygen into 2,4-dinitrotoluene (DNT) to form 4-methyl-5-nitrocatechol (MNC) and nitrite. The beta subunit seems to have a structural role in the holoenzyme. Also able to convert naphthalene to cis-(1R,2S)-dihydroxy-1,2-dihydronaphthalene. This is 2,4-dinitrotoluene dioxygenase system, small oxygenase component from Burkholderia sp. (strain RASC).